Here is a 326-residue protein sequence, read N- to C-terminus: DNA repair protein XRCC4 (326 aa).

Residues 1–212 (MERKVSRIYL…QLEESTKPER (212 aa)) are interaction with IFFO1. A Phosphoserine; by PRKDC modification is found at serine 53. Coiled-coil stretches lie at residues 131 to 165 (LDTI…FEKC) and 185 to 209 (NEKK…ESTK). The interaction with LIG4 stretch occupies residues 180–211 (FILVLNEKKTKIRSLHKLLNEVQQLEESTKPE). Residue serine 193 is modified to Phosphoserine; by PRKDC. Positions 203–326 (QLEESTKPER…RNSSPEDLFD (124 aa)) are disordered. The span at 206–226 (ESTKPERENPCSDKTPEEHGL) shows a compositional bias: basic and acidic residues. Tyrosine 227 is subject to Phosphotyrosine. At serine 230 the chain carries Phosphoserine. Phosphothreonine is present on threonine 231. Phosphoserine is present on serine 235. The residue at position 244 (threonine 244) is a Phosphothreonine. A Phosphoserine modification is found at serine 250. Serine 254 bears the Phosphoserine; by PRKDC mark. The Nuclear localization signal signature appears at 264 to 269 (RKRRHR). Residue lysine 290 forms a Glycyl lysine isopeptide (Lys-Gly) (interchain with G-Cter in ubiquitin) linkage. Serine 295 bears the Phosphoserine; by PRKDC mark. The residue at position 296 (serine 296) is a Phosphoserine. Serine 307 and serine 312 each carry phosphoserine; by PRKDC. The segment covering 307–326 (SAENMSLETLRNSSPEDLFD) has biased composition (polar residues). Threonine 315 bears the Phosphothreonine; by PRKDC mark. Phosphoserine; by PRKDC occurs at positions 319 and 320.

This sequence belongs to the XRCC4-XLF family. XRCC4 subfamily. In terms of assembly, homodimer and homotetramer in solution. Interacts with NHEJ1/XLF; the interaction is direct and is mediated via a head-to-head interaction between N-terminal head regions. Interacts with LIG4; the LIG4-XRCC4 subcomplex has a 1:2 stoichiometry and XRCC4 is required for LIG4 stability. Component of the core long-range non-homologous end joining (NHEJ) complex (also named DNA-PK complex) composed of PRKDC, LIG4, XRCC4, XRCC6/Ku70, XRCC5/Ku86 and NHEJ1/XLF. Additional component of the NHEJ complex includes PAXX. Following autophosphorylation, PRKDC dissociates from DNA, leading to formation of the short-range NHEJ complex, composed of LIG4, XRCC4, XRCC6/Ku70, XRCC5/Ku86 and NHEJ1/XLF. Interacts with PRKDC; the interaction is direct. Interacts with XRCC6/Ku70; the interaction is direct. Interacts with APTX and APLF. Forms a heterotetramer with IFFO1; the interaction involves LIG4-free XRCC4 and leads to the relocalization of IFFO1 to the sites of DNA damage. Interacts with PNKP; mainly interacts with PNKP when phosphorylated at Thr-231, but is also able to interact at much lower level with PNKP when not unphosphorylated. Interacts with POLL (DNA polymerase lambda). As to quaternary structure, interacts with XKR4; interacts with the processed form of XKR4, which is cleaved by caspase. Phosphorylated by PRKDC at the C-terminus in response to DNA damage; Ser-254 and Ser-312 constitute the main phosphorylation sites. Phosphorylation by PRKDC at the C-terminus of XRCC4 and NHEJ1/XLF are highly redundant and regulate ability of the XRCC4-NHEJ1/XLF subcomplex to bridge DNA. Phosphorylation by PRKDC does not prevent interaction with NHEJ1/XLF but disrupts ability to bridge DNA and promotes detachment from DNA. Phosphorylation at Ser-319 and Ser-320 by PRKDC promotes recognition by the SCF(FBXW7) complex and subsequent ubiquitination via 'Lys-63'-linked ubiquitin. Phosphorylation at Thr-231 by CK2 promotes interaction with PNKP; regulating PNKP activity and localization to DNA damage sites. Phosphorylation by CK2 promotes interaction with APTX. In terms of processing, ubiquitinated at Lys-290 by the SCF(FBXW7) complex via 'Lys-63'-linked ubiquitination, thereby promoting double-strand break repair: the SCF(FBXW7) complex specifically recognizes XRCC4 when phosphorylated at Ser-319 and Ser-320 by PRKDC, and 'Lys-63'-linked ubiquitination facilitates DNA non-homologous end joining (NHEJ) by enhancing association with XRCC5/Ku80 and XRCC6/Ku70. Monoubiquitinated. Post-translationally, undergoes proteolytic processing by caspase-3 (CASP3). This generates the protein XRCC4, C-terminus (XRCC4/C), which translocates to the cytoplasm and activates phospholipid scramblase activity of XKR4, thereby promoting phosphatidylserine exposure on apoptotic cell surface.

It localises to the nucleus. The protein resides in the chromosome. Its subcellular location is the cytoplasm. In terms of biological role, DNA non-homologous end joining (NHEJ) core factor, required for double-strand break repair and V(D)J recombination. Acts as a scaffold protein that regulates recruitment of other proteins to DNA double-strand breaks (DSBs). Associates with NHEJ1/XLF to form alternating helical filaments that bridge DNA and act like a bandage, holding together the broken DNA until it is repaired. The XRCC4-NHEJ1/XLF subcomplex binds to the DNA fragments of a DSB in a highly diffusive manner and robustly bridges two independent DNA molecules, holding the broken DNA fragments in close proximity to one other. The mobility of the bridges ensures that the ends remain accessible for further processing by other repair factors. Plays a key role in the NHEJ ligation step of the broken DNA during DSB repair via direct interaction with DNA ligase IV (LIG4): the LIG4-XRCC4 subcomplex reseals the DNA breaks after the gap filling is completed. XRCC4 stabilizes LIG4, regulates its subcellular localization and enhances LIG4's joining activity. Binding of the LIG4-XRCC4 subcomplex to DNA ends is dependent on the assembly of the DNA-dependent protein kinase complex DNA-PK to these DNA ends. Promotes displacement of PNKP from processed strand break termini. Functionally, acts as an activator of the phospholipid scramblase activity of XKR4. This form, which is generated upon caspase-3 (CASP3) cleavage, translocates into the cytoplasm and interacts with XKR4, thereby promoting phosphatidylserine scramblase activity of XKR4 and leading to phosphatidylserine exposure on apoptotic cell surface. In Mus musculus (Mouse), this protein is DNA repair protein XRCC4.